A 772-amino-acid polypeptide reads, in one-letter code: Metabotropic glutamate receptor-like protein G (772 aa).

Residues 1–23 (MKKIIFLVLFLIFIFKDIKSSYG) form the signal peptide. Topologically, residues 24 to 391 (VDLVNFKMIT…TQVKFSPSIQ (368 aa)) are extracellular. N-linked (GlcNAc...) asparagine glycosylation is found at N73, N126, N262, N313, N343, and N378. A helical membrane pass occupies residues 392-412 (IGVSIVSGVLIAIVLLSMVGV). Residues 413-426 (YKYRASSSIRSASP) are Cytoplasmic-facing. The helical transmembrane segment at 427-447 (IFLIFILFGALIVFGGIILWV) threads the bilayer. The Extracellular segment spans residues 448 to 463 (SELNDHVCNGRLWMVT). Residues 464 to 484 (LGFSTLIGSLVVKNFRIWLIF) traverse the membrane as a helical segment. Residues 485–500 (DNPELKTVKITNYQLY) are Cytoplasmic-facing. The chain crosses the membrane as a helical span at residues 501–521 (PWVACCLVINIILMSILTSLG). The Extracellular portion of the chain corresponds to 522–551 (DLREVDATGIDSLGKYEFLKICKMNNSGAS). N-linked (GlcNAc...) asparagine glycosylation occurs at N546. A helical membrane pass occupies residues 552–572 (VLYTILAYFGALLLTGVFVSW). Topologically, residues 573–586 (KIRIVDIEEFNESR) are cytoplasmic. The chain crosses the membrane as a helical span at residues 587 to 607 (AIAHTLYAISFCLFVIVPLMI). Residues 608–616 (SPLEKQSET) lie on the Extracellular side of the membrane. Residues 617–637 (IILSVAGLFITTAAVLIIFLP) traverse the membrane as a helical segment. Residues 638 to 772 (KFYRVYEYGE…QIEPDEKNQD (135 aa)) are Cytoplasmic-facing. The segment at 664 to 772 (TARAESHKSS…QIEPDEKNQD (109 aa)) is disordered. Over residues 718 to 728 (FTEESVSEIDE) the composition is skewed to acidic residues. Positions 740 to 753 (PEINQSEQQNSEIE) are enriched in low complexity. The span at 754–763 (QPPPPPPPQQ) shows a compositional bias: pro residues.

This sequence in the N-terminal section; belongs to the BMP lipoprotein family. The protein in the C-terminal section; belongs to the G-protein coupled receptor 3 family. GABA-B receptor subfamily.

Its subcellular location is the membrane. The polypeptide is Metabotropic glutamate receptor-like protein G (grlG) (Dictyostelium discoideum (Social amoeba)).